Reading from the N-terminus, the 150-residue chain is Large ribosomal subunit protein bL9 (150 aa).

This sequence belongs to the bacterial ribosomal protein bL9 family.

In terms of biological role, binds to the 23S rRNA. The polypeptide is Large ribosomal subunit protein bL9 (Mycoplasmopsis pulmonis (strain UAB CTIP) (Mycoplasma pulmonis)).